The primary structure comprises 226 residues: Ribonuclease 3 (226 aa).

The region spanning 6 to 128 is the RNase III domain; it reads INRLQRKLGY…LIGAIFLDSD (123 aa). Glutamate 41 contributes to the Mg(2+) binding site. Aspartate 45 is a catalytic residue. The Mg(2+) site is built by aspartate 114 and glutamate 117. Glutamate 117 is a catalytic residue. One can recognise a DRBM domain in the interval 155–225; the sequence is DPKTRLQEYL…AEQALKQLEL (71 aa).

The protein belongs to the ribonuclease III family. In terms of assembly, homodimer. Mg(2+) is required as a cofactor.

It localises to the cytoplasm. The catalysed reaction is Endonucleolytic cleavage to 5'-phosphomonoester.. Digests double-stranded RNA. Involved in the processing of primary rRNA transcript to yield the immediate precursors to the large and small rRNAs (23S and 16S). Processes some mRNAs, and tRNAs when they are encoded in the rRNA operon. Processes pre-crRNA and tracrRNA of type II CRISPR loci if present in the organism. The protein is Ribonuclease 3 of Photorhabdus laumondii subsp. laumondii (strain DSM 15139 / CIP 105565 / TT01) (Photorhabdus luminescens subsp. laumondii).